The following is a 272-amino-acid chain: ATP phosphoribosyltransferase regulatory subunit (272 aa).

The protein belongs to the class-II aminoacyl-tRNA synthetase family. HisZ subfamily. As to quaternary structure, heteromultimer composed of HisG and HisZ subunits.

Its subcellular location is the cytoplasm. Its pathway is amino-acid biosynthesis; L-histidine biosynthesis; L-histidine from 5-phospho-alpha-D-ribose 1-diphosphate: step 1/9. In terms of biological role, required for the first step of histidine biosynthesis. May allow the feedback regulation of ATP phosphoribosyltransferase activity by histidine. This is ATP phosphoribosyltransferase regulatory subunit from Staphylococcus aureus (strain bovine RF122 / ET3-1).